The sequence spans 294 residues: 33 kDa chaperonin (294 aa).

2 disulfide bridges follow: cysteine 239–cysteine 241 and cysteine 272–cysteine 275.

The protein belongs to the HSP33 family. Under oxidizing conditions two disulfide bonds are formed involving the reactive cysteines. Under reducing conditions zinc is bound to the reactive cysteines and the protein is inactive.

Its subcellular location is the cytoplasm. Redox regulated molecular chaperone. Protects both thermally unfolding and oxidatively damaged proteins from irreversible aggregation. Plays an important role in the bacterial defense system toward oxidative stress. The protein is 33 kDa chaperonin of Listeria welshimeri serovar 6b (strain ATCC 35897 / DSM 20650 / CCUG 15529 / CIP 8149 / NCTC 11857 / SLCC 5334 / V8).